The sequence spans 319 residues: MSDNTLVSDYGMCEEEQVARIAWFYYHDGLTQSEISERLGLTRLKVSRLLEKGHQSGIIRVQINSRFEGCLEYENALRNHFALQNIRVLPALPDADIGLRLGIGAAHMLMESLRPQQLLAVGFGEATMTTLKRLSGFISAQQIRLVTLSGGVGPYMTGIGQLDAACSVSIMPAPLRASSQEIACTLRNENSVRDVMLTAQAADAAIVGIGAINQKDQASILKSGYITQGEQLMIGRKGAVGDILGYFFDAHGEIIPDIKIHNELIGLKLNSLSTIPTVIGVAGGEQKAEAIIAAMRGNYINALVTDQKTAGKIIQIIEK.

The segment at residues 32 to 55 is a DNA-binding region (H-T-H motif); the sequence is QSEISERLGLTRLKVSRLLEKGHQ.

Belongs to the SorC transcriptional regulatory family.

It is found in the cytoplasm. With respect to regulation, inactivated by phosphorylated autoinducer-2 (phospho-AI-2). Phospho-AI-2 acts by binding to LsrR, which is then unable to bind to the promoter regions, allowing the transcription of the target genes. Transcriptional regulator that represses the expression of the lsr operon (lsrACDBFGE) in the absence of the quorum-sensing signaling molecule autoinducer 2 (AI-2). It also represses the expression of the lsrRK operon. Acts by binding to the intergenic region between the lsr operon and lsrR. In the presence of phosphorylated autoinducer-2 (phospho-AI-2), LsrR is inactivated, leading to the transcription of the genes. The regulatory function of LsrR was thought to be limited to the lsr operon, but it was subsequently shown to be involved, directly or indirectly, in the regulation of SPI-1 and flagella genes. It negatively regulates the expression of those genes, which reduces the ability of Salmonella to invade host cells. This chain is Transcriptional regulator LsrR, found in Salmonella typhimurium (strain LT2 / SGSC1412 / ATCC 700720).